The following is a 426-amino-acid chain: uncharacterized protein (426 aa).

The protein belongs to the serpin family.

This is an uncharacterized protein from Methanosarcina mazei (strain ATCC BAA-159 / DSM 3647 / Goe1 / Go1 / JCM 11833 / OCM 88) (Methanosarcina frisia).